Consider the following 252-residue polypeptide: Geranylgeranylglyceryl phosphate synthase (252 aa).

The Mg(2+) site is built by Asp-22 and Ser-51. Residues 170-176 (YFEAGSG), 201-202 (GG), and 223-224 (GS) contribute to the sn-glycerol 1-phosphate site.

This sequence belongs to the GGGP/HepGP synthase family. Group II subfamily. It depends on Mg(2+) as a cofactor.

It is found in the cytoplasm. It carries out the reaction sn-glycerol 1-phosphate + (2E,6E,10E)-geranylgeranyl diphosphate = sn-3-O-(geranylgeranyl)glycerol 1-phosphate + diphosphate. The protein operates within membrane lipid metabolism; glycerophospholipid metabolism. Prenyltransferase that catalyzes the transfer of the geranylgeranyl moiety of geranylgeranyl diphosphate (GGPP) to the C3 hydroxyl of sn-glycerol-1-phosphate (G1P). This reaction is the first ether-bond-formation step in the biosynthesis of archaeal membrane lipids. This is Geranylgeranylglyceryl phosphate synthase from Thermoplasma volcanium (strain ATCC 51530 / DSM 4299 / JCM 9571 / NBRC 15438 / GSS1).